Consider the following 215-residue polypeptide: Adenylate kinase (215 aa).

Residue 10-15 participates in ATP binding; that stretch reads GAGKGT. An NMP region spans residues 30–59; that stretch reads STGDMFRAAIKEGTELGKQAKALMDQGKLV. AMP is bound by residues Thr-31, Arg-36, 57 to 59, 85 to 88, and Gln-92; these read KLV and GFPR. Positions 122 to 159 are LID; it reads GRRVHQPSGRTYHIIYNPPKVAGQDDITGEELITRADD. Residues Arg-123 and 132 to 133 each bind ATP; that span reads TY. Residues Arg-156 and Arg-167 each contribute to the AMP site. Residue Lys-200 participates in ATP binding.

Belongs to the adenylate kinase family. In terms of assembly, monomer.

Its subcellular location is the cytoplasm. The catalysed reaction is AMP + ATP = 2 ADP. It participates in purine metabolism; AMP biosynthesis via salvage pathway; AMP from ADP: step 1/1. Functionally, catalyzes the reversible transfer of the terminal phosphate group between ATP and AMP. Plays an important role in cellular energy homeostasis and in adenine nucleotide metabolism. This Haemophilus ducreyi (strain 35000HP / ATCC 700724) protein is Adenylate kinase.